Here is a 423-residue protein sequence, read N- to C-terminus: UDP-N-acetylglucosamine 1-carboxyvinyltransferase 2 (423 aa).

Phosphoenolpyruvate is bound at residue 23 to 24; it reads KN. Arg-93 lines the UDP-N-acetyl-alpha-D-glucosamine pocket. The active-site Proton donor is Cys-117. Cys-117 bears the 2-(S-cysteinyl)pyruvic acid O-phosphothioketal mark. Residues 122–126, Asp-305, and Ile-327 contribute to the UDP-N-acetyl-alpha-D-glucosamine site; that span reads RPIDQ.

It belongs to the EPSP synthase family. MurA subfamily.

It is found in the cytoplasm. The enzyme catalyses phosphoenolpyruvate + UDP-N-acetyl-alpha-D-glucosamine = UDP-N-acetyl-3-O-(1-carboxyvinyl)-alpha-D-glucosamine + phosphate. Its pathway is cell wall biogenesis; peptidoglycan biosynthesis. In terms of biological role, cell wall formation. Adds enolpyruvyl to UDP-N-acetylglucosamine. This is UDP-N-acetylglucosamine 1-carboxyvinyltransferase 2 from Listeria monocytogenes serovar 1/2a (strain ATCC BAA-679 / EGD-e).